Consider the following 324-residue polypeptide: Sperm acrosome membrane-associated protein 6 (324 aa).

Positions 1 to 26 (MALLALASAVPSALLALAVFRVPAWA) are cleaved as a signal peptide. The CXXC motif signature appears at 27–30 (CLLC). Disulfide bonds link C27-C139, C30-C142, C41-C55, C124-C147, C128-C153, and C170-C226. Over 27 to 295 (CLLCFTTYSE…RPEALTPSNL (269 aa)) the chain is Extracellular. A CXXC motif motif is present at residues 139–142 (CSGC). In terms of domain architecture, Ig-like spans 150–236 (PLDCPVQDVT…VIKQDQRPLA (87 aa)). Residue N243 is glycosylated (N-linked (GlcNAc...) asparagine). The helical transmembrane segment at 296 to 316 (FLLAVLGALASASATVLAWMF) threads the bilayer. The Cytoplasmic segment spans residues 317–324 (FRWYCSGN).

Belongs to the SPACA6 family. In terms of assembly, forms a complex with IZUMO1 and TMEM81 on spermatocyte cell membrane required for fertilization. Detected at the sperm head, equatorial region, neck and midpiece (at protein level). Expressed in testis.

It is found in the cytoplasmic vesicle. It localises to the secretory vesicle. The protein resides in the acrosome membrane. Functionally, sperm protein required for fusion of sperm with the egg membrane during fertilization. May regulate the expression of sperm surface protein DCST2. The polypeptide is Sperm acrosome membrane-associated protein 6 (Homo sapiens (Human)).